Consider the following 883-residue polypeptide: MSRQSSITVTVRVRPFSTAESANLIASSDRLSFGTSSSLRNPGSGRQIRRVVKVLDGRVLVFDPPDETTATLSATNRRLSTSQQSLARLSRKSNNSAGFGRDLRYAFDRVFDETATQQQVYERTARPLLDNILDGFNATIFAYGATGCGKTHTISGTMQDPGLIYLTLKELFERMDHLRDEKIFDLRLSYLEIYNETIRDLLVSPTPNQAKPLNLREDADRRITVPGLTSLSPESLEEIIDIIMKGNANRTMSPTEANAASSRSHAVLQVTLIQKPRTAGINEDHTLATLSIIDLAGSERATATKLRGSRLFEGANINKSLLALGNCINALCDPHRRAHVPYRDSKLTRLLKFSLGGNCRTVMIVCVSPSSVHYEETHNTLKYANRAKNIKTEVLRNMISVDRHVSQYVKAIVELREQISELENRLAQIDLSSQSNGSDQDAVTQSFAHESKLAEARNLLRMTFEETLPLQNDTINKVEKVKHFDDSIRVLKYWLSCYERILPNSADERVFLVRSKLESLLTRRAEIIADIDPELVYQKFQRSVSHIINTYKQEGATMYADVLQDEVDLLKSIIENQVLDAQNKVDEFTPVLESLLRSSFKASSLLKEGGMQELFSILEKWLLGIGLGEKPNISVLSESYKLNSTSDDSRTINRDRVHSFPTQPLLNNNLPRMFFVKSPKKPVVFSKRSPKKRVRFDDSMSTSDSGASAYNSPIQTSKLKNMNFFNTMHMPSTPAHKRPENKNQIDVEINLTSPVSPMLEDKPEPGLLIKSPLEKKQEVNSESTQLDQLLAEDSSTDDVSLPHLDTIDLDGSPVPKVPDLNFSRANMDSPTFILNNEAIHNFDFSKPKTRQSLSSLTTLHLSNPANIIRKSLSMAENEEEKAT.

One can recognise a Kinesin motor domain in the interval 6–390 (SITVTVRVRP…LKYANRAKNI (385 aa)). Residue 144–151 (GATGCGKT) participates in ATP binding. Coiled coils occupy residues 396 to 435 (RNMI…SSQS) and 563 to 588 (LQDE…VDEF). The interval 755–785 (VSPMLEDKPEPGLLIKSPLEKKQEVNSESTQ) is disordered.

This sequence belongs to the TRAFAC class myosin-kinesin ATPase superfamily. Kinesin family. Kinesin II subfamily. In terms of assembly, heterodimer with klp6.

It is found in the cytoplasm. The protein resides in the cytoskeleton. The protein localises to the chromosome. Its subcellular location is the centromere. It localises to the kinetochore. It is found in the spindle. Its function is as follows. Has a role in establishing metaphase during mitosis. Required for chromosome segregation where it generates tension during kinetochore capturing. In Schizosaccharomyces pombe (strain 972 / ATCC 24843) (Fission yeast), this protein is Kinesin-like protein 5 (klp5).